The following is a 536-amino-acid chain: Glucan 1,6-alpha-glucosidase (536 aa).

Asp194 acts as the Nucleophile in catalysis. Glu236 functions as the Proton donor in the catalytic mechanism.

The protein belongs to the glycosyl hydrolase 13 family.

The protein resides in the cytoplasm. It catalyses the reaction Hydrolysis of (1-&gt;6)-alpha-D-glucosidic linkages in (1-&gt;6)-alpha-D-glucans and derived oligosaccharides.. In terms of biological role, the physiological substrates may be short isomaltosaccharides. In Streptococcus mutans serotype c (strain ATCC 700610 / UA159), this protein is Glucan 1,6-alpha-glucosidase (dexB).